Here is a 211-residue protein sequence, read N- to C-terminus: SAGA-associated factor 11 homolog (211 aa).

The SGF11-type zinc-finger motif lies at 115-136; it reads CTCPHCDRLVAAARFAPHLEKC. A disordered region spans residues 153-211; it reads TKEGASASSSSTSTYIQSGGNTGGTDDEDDVDWSSDKRKKKSTQNSRNNGSKKNNGKIF. Residues 157-166 show a composition bias toward low complexity; it reads ASASSSSTST. Ser-187 carries the post-translational modification Phosphoserine. Residues 197–211 are compositionally biased toward low complexity; the sequence is NSRNNGSKKNNGKIF.

The protein belongs to the SGF11 family. As to quaternary structure, component of some SAGA transcription coactivator-HAT complexes, at least composed of Ada2b, not/nonstop, Pcaf/Gcn5, Sgf11 and Spt3. Within the SAGA complex, Sgf11, e(y)2, and not/nonstop form an additional subcomplex of SAGA called the DUB module (deubiquitination module). Interacts directly with not/nonstop. Interacts with the AMEX complex component xmas-2. Interacts with Cbp80; important for promoter recruitment of Sgf11 that is not associated with the DUB module.

It is found in the nucleus. The protein localises to the nucleoplasm. It localises to the cytoplasm. Component of the transcription regulatory histone acetylation (HAT) complex SAGA, a multiprotein complex that activates transcription by remodeling chromatin and mediating histone acetylation and deubiquitination. Within the SAGA complex, participates in a subcomplex that specifically deubiquitinates histone H2B. The SAGA complex is recruited to specific gene promoters by activators, where it is required for transcription. Required for nuclear receptor-mediated transactivation. Binds independently on SAGA to promoters in an RNA-dependent manner. Binds to mRNA and is essential for total mRNA export from the nucleus. Required to counteract heterochromatin silencing. Controls the development of neuronal connectivity in visual system by being required for accurate axon targeting in the optic lobe. Required for expression of ecdysone-induced genes such as br/broad. The protein is SAGA-associated factor 11 homolog of Drosophila mojavensis (Fruit fly).